The following is an 874-amino-acid chain: Alanine--tRNA ligase (874 aa).

His-562, His-566, Cys-664, and His-668 together coordinate Zn(2+).

This sequence belongs to the class-II aminoacyl-tRNA synthetase family. It depends on Zn(2+) as a cofactor.

The protein localises to the cytoplasm. It carries out the reaction tRNA(Ala) + L-alanine + ATP = L-alanyl-tRNA(Ala) + AMP + diphosphate. In terms of biological role, catalyzes the attachment of alanine to tRNA(Ala) in a two-step reaction: alanine is first activated by ATP to form Ala-AMP and then transferred to the acceptor end of tRNA(Ala). Also edits incorrectly charged Ser-tRNA(Ala) and Gly-tRNA(Ala) via its editing domain. The sequence is that of Alanine--tRNA ligase from Shewanella sp. (strain MR-7).